The sequence spans 286 residues: Shikimate dehydrogenase (NADP(+)) (286 aa).

Residues 19-21 and Thr66 each bind shikimate; that span reads SLS. Lys70 functions as the Proton acceptor in the catalytic mechanism. Positions 91 and 107 each coordinate shikimate. NADP(+) is bound by residues 129-133 and Leu229; that span reads GSGGA. Position 231 (Tyr231) interacts with shikimate. Gly252 is an NADP(+) binding site.

Belongs to the shikimate dehydrogenase family. Homodimer.

It catalyses the reaction shikimate + NADP(+) = 3-dehydroshikimate + NADPH + H(+). It functions in the pathway metabolic intermediate biosynthesis; chorismate biosynthesis; chorismate from D-erythrose 4-phosphate and phosphoenolpyruvate: step 4/7. Involved in the biosynthesis of the chorismate, which leads to the biosynthesis of aromatic amino acids. Catalyzes the reversible NADPH linked reduction of 3-dehydroshikimate (DHSA) to yield shikimate (SA). This chain is Shikimate dehydrogenase (NADP(+)), found in Prochlorococcus marinus (strain AS9601).